A 596-amino-acid chain; its full sequence is Putative terpene synthase 3, chloroplastic (596 aa).

Residues 1 to 46 constitute a chloroplast transit peptide; that stretch reads MATLSMQVSTLSKQVKNLNTFGMGSASKLPMVARRVSTIRLRPICS. The Mn(2+) site is built by aspartate 349 and aspartate 353. A DDXXD motif motif is present at residues 349 to 353; sequence DDVYD. Homodimerization regions lie at residues 355 to 361 and 427 to 464; these read YGTLDEL and EAKW…FTLP. Mn(2+) is bound by residues aspartate 493 and glutamate 501.

It belongs to the terpene synthase family. As to quaternary structure, homodimer. Mn(2+) is required as a cofactor. Requires Mg(2+) as cofactor.

It localises to the plastid. The protein localises to the chloroplast. It participates in secondary metabolite biosynthesis; terpenoid biosynthesis. Functionally, putative monoterpene synthase. The protein is Putative terpene synthase 3, chloroplastic of Thymus vulgaris (Thyme).